The following is a 385-amino-acid chain: MNHLRAEGPASVLAIGTANPENILIQDEFPDYYFRVTKSEHMTQLKEKFRKICDKSMIRKRNIFLNEEHLKQNPKLVEHDVQTLDARQDMLVVEVPKLGKDACAKAIKEWGQPKSKITHLIFTSASTTDMPGADYHCAKLLGLSPSVKRVMMYQLGCYGGGTVLRIAKDIAENNKGARVLAVCCDIMACLFRGPSDSDLELLVGQAIFGDGAAAVIVGAEPDESVGERPIFELVSTGQTILPNSEGTIGGHIREAGLIFDLHKDVPMLISNNIEKCLIEAFTPIGISDWNSIFWITHPGGKAILDKVEEKLHLKSDKFVDSRHVLSEHGNMSSSTVLFVMDELRKRSLEEGKSTTGDGFEWGVLFGFGPGLTVERVVVRSVPIKY.

Residue C157 is part of the active site.

Belongs to the thiolase-like superfamily. Chalcone/stilbene synthases family. In terms of tissue distribution, expressed in glandular trichomes.

It is found in the cytoplasm. Functionally, polyketide synthase responsible for the biosynthesis of secondary metabolites. This Cannabis sativa (Hemp) protein is Polyketide synthase 1 (PKSG1).